Consider the following 267-residue polypeptide: Non-homologous end joining protein Ku (267 aa).

The Ku domain occupies 10 to 190; that stretch reads ISFGLVSFPV…TKYTAKELEL (181 aa).

This sequence belongs to the prokaryotic Ku family. Homodimer. Interacts with LigD.

Functionally, with LigD forms a non-homologous end joining (NHEJ) DNA repair enzyme, which repairs dsDNA breaks with reduced fidelity. Binds linear dsDNA with 5'- and 3'- overhangs but not closed circular dsDNA nor ssDNA. Recruits and stimulates the ligase activity of LigD. This chain is Non-homologous end joining protein Ku, found in Solibacter usitatus (strain Ellin6076).